Here is a 77-residue protein sequence, read N- to C-terminus: Translation initiation factor IF-1, chloroplastic (77 aa).

One can recognise an S1-like domain in the interval 1–71 (MKEQKWVHEG…TRGRIIYRLR (71 aa)).

Belongs to the IF-1 family. In terms of assembly, component of the 30S ribosomal translation pre-initiation complex which assembles on the 30S ribosome in the order IF-2 and IF-3, IF-1 and N-formylmethionyl-tRNA(fMet); mRNA recruitment can occur at any time during PIC assembly.

The protein localises to the plastid. It localises to the chloroplast. One of the essential components for the initiation of protein synthesis. Stabilizes the binding of IF-2 and IF-3 on the 30S subunit to which N-formylmethionyl-tRNA(fMet) subsequently binds. Helps modulate mRNA selection, yielding the 30S pre-initiation complex (PIC). Upon addition of the 50S ribosomal subunit IF-1, IF-2 and IF-3 are released leaving the mature 70S translation initiation complex. The protein is Translation initiation factor IF-1, chloroplastic of Cercidiphyllum japonicum (Katsura tree).